Here is a 126-residue protein sequence, read N- to C-terminus: C-X-C motif chemokine 9 (126 aa).

A signal peptide spans 1-21; that stretch reads MKSAVLFLLGIIFLEQCGVRG. 2 cysteine pairs are disulfide-bonded: Cys30-Cys57 and Cys32-Cys73. An N-linked (GlcNAc...) asparagine glycan is attached at Asn58. The tract at residues 91 to 126 is disordered; that stretch reads KISQKKKQKRGKKHQKNMKNRKPKTPQSRRRSRKTT. Basic residues predominate over residues 93 to 126; that stretch reads SQKKKQKRGKKHQKNMKNRKPKTPQSRRRSRKTT.

Belongs to the intercrine alpha (chemokine CxC) family.

It localises to the secreted. In terms of biological role, may be a cytokine that affects the growth, movement, or activation state of cells that participate in immune and inflammatory response. In Mus musculus (Mouse), this protein is C-X-C motif chemokine 9 (Cxcl9).